Reading from the N-terminus, the 315-residue chain is Malate dehydrogenase (315 aa).

NAD(+) is bound by residues 10–15 and Asp34; that span reads GSGFTG. The substrate site is built by Arg85 and Arg91. Residues Asn98 and 121 to 123 contribute to the NAD(+) site; that span reads LTN. Substrate-binding residues include Asn123 and Arg154. His178 (proton acceptor) is an active-site residue.

This sequence belongs to the LDH/MDH superfamily. MDH type 3 family.

It catalyses the reaction (S)-malate + NAD(+) = oxaloacetate + NADH + H(+). Catalyzes the reversible oxidation of malate to oxaloacetate. This Symbiobacterium thermophilum (strain DSM 24528 / JCM 14929 / IAM 14863 / T) protein is Malate dehydrogenase.